The primary structure comprises 652 residues: Oligopeptide-binding protein AliB (652 aa).

Positions 1–24 (MKKSKSKYLTLAGLVLGTGVLLSA) are cleaved as a signal peptide. A lipid anchor (N-palmitoyl cysteine) is attached at Cys25. Cys25 is lipidated: S-diacylglycerol cysteine.

It belongs to the bacterial solute-binding protein 5 family.

It localises to the cell membrane. Its function is as follows. Part of the binding-protein-dependent transport system for oligopeptides; probably an oligopeptide binding protein. The protein is Oligopeptide-binding protein AliB (aliB) of Streptococcus pneumoniae serotype 4 (strain ATCC BAA-334 / TIGR4).